Consider the following 472-residue polypeptide: Ribosomal protein uS12 methylthiotransferase RimO (472 aa).

Positions 33–143 (NRIGFVSLGC…VLKHVHKYVP (111 aa)) constitute an MTTase N-terminal domain. [4Fe-4S] cluster-binding residues include Cys-42, Cys-78, Cys-107, Cys-175, Cys-179, and Cys-182. Residues 161-398 (LTPKHYAYLK…MEVQAEISAE (238 aa)) form the Radical SAM core domain. The region spanning 401–467 (ARFVGRTLDI…EHDLWAEVVD (67 aa)) is the TRAM domain.

The protein belongs to the methylthiotransferase family. RimO subfamily. [4Fe-4S] cluster serves as cofactor.

It is found in the cytoplasm. The catalysed reaction is L-aspartate(89)-[ribosomal protein uS12]-hydrogen + (sulfur carrier)-SH + AH2 + 2 S-adenosyl-L-methionine = 3-methylsulfanyl-L-aspartate(89)-[ribosomal protein uS12]-hydrogen + (sulfur carrier)-H + 5'-deoxyadenosine + L-methionine + A + S-adenosyl-L-homocysteine + 2 H(+). Functionally, catalyzes the methylthiolation of an aspartic acid residue of ribosomal protein uS12. The protein is Ribosomal protein uS12 methylthiotransferase RimO of Shewanella baltica (strain OS185).